We begin with the raw amino-acid sequence, 72 residues long: Exodeoxyribonuclease 7 small subunit (72 aa).

Belongs to the XseB family. In terms of assembly, heterooligomer composed of large and small subunits.

It localises to the cytoplasm. It catalyses the reaction Exonucleolytic cleavage in either 5'- to 3'- or 3'- to 5'-direction to yield nucleoside 5'-phosphates.. Bidirectionally degrades single-stranded DNA into large acid-insoluble oligonucleotides, which are then degraded further into small acid-soluble oligonucleotides. This chain is Exodeoxyribonuclease 7 small subunit, found in Ruegeria pomeroyi (strain ATCC 700808 / DSM 15171 / DSS-3) (Silicibacter pomeroyi).